The sequence spans 189 residues: UPF0301 protein HRM2_24640 (189 aa).

The protein belongs to the UPF0301 (AlgH) family.

The protein is UPF0301 protein HRM2_24640 of Desulforapulum autotrophicum (strain ATCC 43914 / DSM 3382 / VKM B-1955 / HRM2) (Desulfobacterium autotrophicum).